We begin with the raw amino-acid sequence, 332 residues long: MTPETHVDMINASEKAPKERAYVTFLAGNGDYVKGVVGLAKGLRKVKSAYPLVVAMLPDVPEEHREILRSQGCIVREIEPVHPPDSQDAYARAYYIINYSKLRIWNFEEYNKMIYLDADIQVFGNIDDLFDMQDGYLHGVLSCFCEKIWSYTPLYSIGYCQYCPEKVVWPAEMESAPPSPYFNAGMFVFEPNPLTYESLLQTLQVTPPTPFAEQDFLNMFFGKVFKPVSPVYNLILSVLWRHPGKVDLESVKVVHYCPPGSKPWRYTGEEPNMDREDVKMLIKKWWDIYNDESLDFKPKSPADLEATVLESTIIASVTEAPLSYSPAAPSAA.

Lysine 101 is a catalytic residue. The Mn(2+) site is built by aspartate 117, aspartate 119, and histidine 255.

The protein belongs to the glycosyltransferase 8 family. Galactosyltransferase subfamily. A divalent metal cation serves as cofactor.

The protein localises to the cytoplasm. It carries out the reaction myo-inositol + UDP-alpha-D-galactose = alpha-D-galactosyl-(1-&gt;3)-1D-myo-inositol + UDP + H(+). Galactinol synthase involved in the biosynthesis of raffinose family oligosaccharides (RFOs) that function as osmoprotectants. May promote plant stress tolerance. The chain is Galactinol synthase 7 (GOLS7) from Arabidopsis thaliana (Mouse-ear cress).